We begin with the raw amino-acid sequence, 340 residues long: Putative Ig-like domain-containing protein C1 (340 aa).

Residues 207 to 294 (PTVTVTGIER…SSPRVMVPTI (88 aa)) enclose the Ig-like domain.

The sequence is that of Putative Ig-like domain-containing protein C1 from Sus scrofa (Pig).